The following is a 344-amino-acid chain: N-acetyl-gamma-glutamyl-phosphate reductase (344 aa).

Residue Cys150 is part of the active site.

It belongs to the NAGSA dehydrogenase family. Type 1 subfamily.

The protein resides in the cytoplasm. The catalysed reaction is N-acetyl-L-glutamate 5-semialdehyde + phosphate + NADP(+) = N-acetyl-L-glutamyl 5-phosphate + NADPH + H(+). Its pathway is amino-acid biosynthesis; L-arginine biosynthesis; N(2)-acetyl-L-ornithine from L-glutamate: step 3/4. In terms of biological role, catalyzes the NADPH-dependent reduction of N-acetyl-5-glutamyl phosphate to yield N-acetyl-L-glutamate 5-semialdehyde. In Pseudomonas putida (strain ATCC 700007 / DSM 6899 / JCM 31910 / BCRC 17059 / LMG 24140 / F1), this protein is N-acetyl-gamma-glutamyl-phosphate reductase.